The primary structure comprises 596 residues: MGKKSRVKTQKSGTGATATVSPKEILNLTSELLQKCSSPAPGPGKEWEEYTQIRALVEKIRKKQKGLSVTFDGKREDYFPDLMKWASENGASVEGFEMVNFKEEGFGLRATRDIKAEELFLWVPRKLLMTVESAKNSILGPLYSQDRILQAMGNIALAFHLLCERASPNSFWQPYIQTLPSEYDTPLYFEEEEVRCLQSTQAIHDVFSQYKNTARQYAYFYKVIQTHPHANKLPLKDSFTYEDYRWAVSSVMTRQNQIPTEDGSRVTLALIPLWDMCNHTNGLITTGYNLEDDRCECVALQDFQAGDQIYIFYGTRSNAEFVIHSGFFFDNNSHDRVKIKLGVSKSDRLYAMKAEVLARAGIPTSSVFALHFTEPPISAQLLAFLRVFCMTEEELKEHLLGDSAIDRIFTLGNSEFPVSWDNEVKLWTFLEDRASLLLKTYKTTIEEDKTVLKNPDLSVRATMAIKLRLGEKEILEKAVKSAAMNREYYRKHMEERAPLPRYEESDLGLLEGGVGDSRLPLVLRKLEEEAGVQESLSLTETVSKVKAAENGLVNGESLIPNGTRSENESLSPEESENTTGDTEESSGSMDAVKERL.

Positions Met-1–Pro-22 are disordered. Over residues Gln-10–Val-20 the composition is skewed to polar residues. Residues Arg-75, Glu-104–Phe-106, Arg-254, Asp-275–His-279, and Ser-325–Phe-327 contribute to the S-adenosyl-L-methionine site. Residues Glu-94–Gly-314 form the SET domain. Residues Gly-551–Leu-596 are disordered. Residues Ser-571–Glu-584 show a composition bias toward acidic residues.

Belongs to the class V-like SAM-binding methyltransferase superfamily. SETD3 actin-histidine methyltransferase family. Interacts with MYOD1. Post-translationally, phosphorylated by GSK3B, which is required for recognition by the SCF(FBXW7) complex and subsequent degradation. Ubiquitinated by the SCF(FBXW7) complex following phosphorylation by GSK3B, leading to its degradation by the proteasome.

It localises to the cytoplasm. Its subcellular location is the nucleus. The enzyme catalyses L-histidyl-[protein] + S-adenosyl-L-methionine = N(tele)-methyl-L-histidyl-[protein] + S-adenosyl-L-homocysteine + H(+). Functionally, protein-histidine N-methyltransferase that specifically mediates 3-methylhistidine (tele-methylhistidine) methylation of actin at 'His-73'. Histidine methylation of actin is required for smooth muscle contraction of the laboring uterus during delivery. Does not have protein-lysine N-methyltransferase activity and probably only catalyzes histidine methylation of actin. In Rattus norvegicus (Rat), this protein is Actin-histidine N-methyltransferase.